Here is a 975-residue protein sequence, read N- to C-terminus: NLR family member X1 (975 aa).

The transit peptide at 1–86 (MRWGHHLPRA…EAIQRHRRNL (86 aa)) directs the protein to the mitochondrion. The segment at 75 to 556 (ATEAIQRHRR…RALPLLFNLI (482 aa)) is required for interaction with MAVS. Positions 160–483 (QTVVLYGTVG…LRFFLAPCVE (324 aa)) constitute an NACHT domain. 166-173 (GTVGTGKS) lines the ATP pocket. The tract at residues 556-974 (IKVVPRVFGR…ALLEQLGSSG (419 aa)) is required for the repression of MAVS-induced interferon signaling. Positions 667 to 694 (RQVLPPSELLDHLFFHYEFQNQRFSAEV) constitute an LRRNT domain. 8 LRR repeats span residues 695-718 (LSSL…VVAA), 724-747 (RHAL…TLLP), 749-777 (FLRA…LLHD), 778-801 (QCQI…VLME), 811-834 (HLSL…LDRN), 835-857 (RQLQ…ALAR), 858-877 (AARE…ELSS), and 878-899 (EGRQ…VVVS). The LRRCT domain occupies 906–970 (VSEYWSVILS…GEVRALLEQL (65 aa)).

It belongs to the NLRP family. In terms of assembly, homohexamer. Interacts with MAVS. Interacts with TUFM. As to quaternary structure, (Microbial infection) Interacts with influenza A virus protein PB1-F2. As to expression, ubiquitously expressed. Strongest expression in mammary gland, heart and muscle. Detected in HeLa, HEK293T, THP-1, HL-60, Raji and Jurkat cell lines (at protein level).

Its subcellular location is the mitochondrion outer membrane. In terms of biological role, participates in antiviral signaling. Acts as a negative regulator of MAVS-mediated antiviral responses, through the inhibition of the virus-induced RLH (RIG-like helicase)-MAVS interaction. Instead, promotes autophagy by interacting with TUFM and subsequently recruiting the autophagy-related proteins ATG5 and ATG12. Also regulates MAVS-dependent NLRP3 inflammasome activation to attenuate apoptosis. Has no inhibitory function on NF-kappa-B signaling pathway, but enhances NF-kappa-B and JUN N-terminal kinase dependent signaling through the production of reactive oxygen species. Regulates viral mediated-inflammation and energy metabolism in a sex-dependent manner. In females, prevents uncontrolled inflammation and energy metabolism and thus, may contribute to the sex differences observed in infectious and inflammatory diseases. In Homo sapiens (Human), this protein is NLR family member X1 (NLRX1).